Consider the following 362-residue polypeptide: Probable protein phosphatase 2C 11 (362 aa).

The PPM-type phosphatase domain occupies 23-329 (KLGLSSMQGW…DNMTMVLVQF (307 aa)). Mn(2+) contacts are provided by D57, G58, D272, and D320.

This sequence belongs to the PP2C family. Mg(2+) serves as cofactor. It depends on Mn(2+) as a cofactor.

It carries out the reaction O-phospho-L-seryl-[protein] + H2O = L-seryl-[protein] + phosphate. It catalyses the reaction O-phospho-L-threonyl-[protein] + H2O = L-threonyl-[protein] + phosphate. This Oryza sativa subsp. japonica (Rice) protein is Probable protein phosphatase 2C 11.